The chain runs to 161 residues: Periplasmic chaperone Spy (161 aa).

The N-terminal stretch at 1–23 (MRKLTALFVASTLALGAANLAHA) is a signal peptide. The tract at residues 140 to 161 (ANFEKRLTERPAAKGKMPATAE) is disordered. Residues 142 to 151 (FEKRLTERPA) show a composition bias toward basic and acidic residues.

This sequence belongs to the CpxP/Spy family. Homodimer.

Its subcellular location is the periplasm. In terms of biological role, an ATP-independent periplasmic chaperone, decreases protein aggregation and helps protein refolding. Binds substrate over a large region of its convex inner surface. Substrate protein folds while it is bound to chaperone. Increasing Spy flexibility increases its substrate affinity and overall chaperone activity (shown for 3 different substrates). Protects proteins in vitro against tannin inactivation; tannins have antimicrobial activity. Overexpression enhances the stability of otherwise unstable periplasmic proteins. This chain is Periplasmic chaperone Spy, found in Escherichia coli (strain K12).